Reading from the N-terminus, the 491-residue chain is 3-octaprenyl-4-hydroxybenzoate carboxy-lyase (491 aa).

Asn172 is a binding site for Mn(2+). Prenylated FMN is bound by residues Ile175–Arg177, Arg189–Leu191, and Arg194–Gly195. Glu238 lines the Mn(2+) pocket. The active-site Proton donor is the Asp287.

The protein belongs to the UbiD family. Homohexamer. It depends on prenylated FMN as a cofactor. The cofactor is Mn(2+).

It localises to the cell membrane. It carries out the reaction a 4-hydroxy-3-(all-trans-polyprenyl)benzoate + H(+) = a 2-(all-trans-polyprenyl)phenol + CO2. It functions in the pathway cofactor biosynthesis; ubiquinone biosynthesis. Its function is as follows. Catalyzes the decarboxylation of 3-octaprenyl-4-hydroxy benzoate to 2-octaprenylphenol, an intermediate step in ubiquinone biosynthesis. In Histophilus somni (strain 2336) (Haemophilus somnus), this protein is 3-octaprenyl-4-hydroxybenzoate carboxy-lyase.